Reading from the N-terminus, the 96-residue chain is Pterin-4-alpha-carbinolamine dehydratase (96 aa).

It belongs to the pterin-4-alpha-carbinolamine dehydratase family.

The protein resides in the spore wall. The catalysed reaction is (4aS,6R)-4a-hydroxy-L-erythro-5,6,7,8-tetrahydrobiopterin = (6R)-L-erythro-6,7-dihydrobiopterin + H2O. Functionally, has a role in spore wall formation. The polypeptide is Pterin-4-alpha-carbinolamine dehydratase (omt2) (Schizosaccharomyces pombe (strain 972 / ATCC 24843) (Fission yeast)).